The chain runs to 431 residues: Adenylosuccinate synthetase (431 aa).

GTP is bound by residues Gly15–Lys21 and Gly43–Thr45. Asp16 (proton acceptor) is an active-site residue. Residues Asp16 and Gly43 each coordinate Mg(2+). Residues Asp16–Lys19, Asn41–His44, Thr135, Arg149, Asn227, Thr242, and Arg306 each bind IMP. The Proton donor role is filled by His44. Residue Val302–Arg308 coordinates substrate. GTP is bound by residues Arg308, Lys334–Asp336, and Gly416–Gly418.

The protein belongs to the adenylosuccinate synthetase family. Homodimer. It depends on Mg(2+) as a cofactor.

Its subcellular location is the cytoplasm. It catalyses the reaction IMP + L-aspartate + GTP = N(6)-(1,2-dicarboxyethyl)-AMP + GDP + phosphate + 2 H(+). It participates in purine metabolism; AMP biosynthesis via de novo pathway; AMP from IMP: step 1/2. Functionally, plays an important role in the de novo pathway and in the salvage pathway of purine nucleotide biosynthesis. Catalyzes the first committed step in the biosynthesis of AMP from IMP. The chain is Adenylosuccinate synthetase from Monosiga brevicollis (Choanoflagellate).